Reading from the N-terminus, the 290-residue chain is 4-diphosphocytidyl-2-C-methyl-D-erythritol kinase (290 aa).

Lys-14 is a catalytic residue. An ATP-binding site is contributed by 103 to 113; it reads PMGGGLGGGSS. Residue Asp-145 is part of the active site.

It belongs to the GHMP kinase family. IspE subfamily. Homodimer.

It catalyses the reaction 4-CDP-2-C-methyl-D-erythritol + ATP = 4-CDP-2-C-methyl-D-erythritol 2-phosphate + ADP + H(+). The protein operates within isoprenoid biosynthesis; isopentenyl diphosphate biosynthesis via DXP pathway; isopentenyl diphosphate from 1-deoxy-D-xylulose 5-phosphate: step 3/6. Its function is as follows. Catalyzes the phosphorylation of the position 2 hydroxy group of 4-diphosphocytidyl-2C-methyl-D-erythritol. The polypeptide is 4-diphosphocytidyl-2-C-methyl-D-erythritol kinase (Pectobacterium carotovorum subsp. carotovorum (strain PC1)).